An 892-amino-acid polypeptide reads, in one-letter code: UPF0182 protein Gura_0902 (892 aa).

The next 7 helical transmembrane spans lie at 6 to 26 (FIII…LINF), 50 to 70 (VGAG…NLHF), 103 to 123 (LGIL…AMQW), 158 to 178 (MLKI…GAVY), 201 to 221 (LAVL…LNGC), 248 to 268 (ILTV…WQGA), and 271 to 291 (LALL…KAYP).

Belongs to the UPF0182 family.

It localises to the cell membrane. The protein is UPF0182 protein Gura_0902 of Geotalea uraniireducens (strain Rf4) (Geobacter uraniireducens).